A 949-amino-acid polypeptide reads, in one-letter code: L-fucokinase/L-fucose-1-P guanylyltransferase (949 aa).

Residues 25-191 (DWFCTSDPVG…DFMLQKPSLA (167 aa)) are fucose-1-phosphate guanylyltransferase. The interval 559–949 (LLRDGLLDGI…SDKGFQVSRS (391 aa)) is L-fucokinase.

This sequence belongs to the GHMP kinase family. Homotetramer. Mn(2+) serves as cofactor. The cofactor is Mg(2+).

The catalysed reaction is L-fucose + ATP = beta-L-fucose 1-phosphate + ADP + H(+). The enzyme catalyses beta-L-fucose 1-phosphate + GTP + H(+) = GDP-beta-L-fucose + diphosphate. In terms of biological role, bifunctional enzyme involved in the salvage pathway of GDP-fucose synthesis. Catalyzes two successive reactions, the ATP-dependent phosphorylation of L-fucose to L-fucose 1-phosphate, and its guanylylation to GDP-L-fucose. GDP-fucose is an important fucose donor in the process of fucosylated oligosaccharides formation. The sequence is that of L-fucokinase/L-fucose-1-P guanylyltransferase from Bacteroides fragilis.